Consider the following 538-residue polypeptide: Cytochrome P450 monooxygenase okaG (538 aa).

Residues 3-23 (LISPLAAVLSAMAIVLGLLFF) traverse the membrane as a helical segment. Position 484 (Cys-484) interacts with heme.

The protein belongs to the cytochrome P450 family. Heme is required as a cofactor.

It is found in the membrane. The enzyme catalyses 12-deshydroxyl okaramine E + 2 reduced [NADPH--hemoprotein reductase] + 2 O2 = 3-desmethyl okaramine B + 2 oxidized [NADPH--hemoprotein reductase] + 2 H2O + 2 H(+). The protein operates within alkaloid biosynthesis. In terms of biological role, nonribosomal peptide synthetase; part of the gene cluster that mediates the biosynthesis of okaramine B, a prenylated indole alkaloid that possesses an unusual octacyclic ring system, including a four-membered azetidine ring and an eight-membered azocine ring, and that exhibits insecticidal activity against silkworm larvae. Within the pathway, okaG acts as a 2,3-diol synthase that installs 2,3-diol on the okaramine scaffold to convert 12-deshydroxyl okaramine E into 3-desmethyl okaramine B. OkaG is also able to produce use okaramine E and produce okaramine D with the help of the methyltransferase okaF. The biosynthesis begins with the NRPS okaA that condenses two tryptophan molecules into cyclo(L-Trp-L-Trp). Prenylation by the prenyltransferase okaC then leads to the formation of cyclo(N8-(alpha,alpha-dimethylallyl)-L-Trp-6a-(alpha,alpha-dime-thylallyl)-L-Trp). This is followed by indole 2,3-epoxidation by the FAD-dependent monooxygenase okaB to facilitate the formation of the hexahydropyrrolo[2,3-b]indole (HPI) moiety of okaramine C. The cytochrome P450 monooxygenase okaD then likely catalyzes formation of the eight-membered ring of okaramine A. The dioxygenase okaE further forms the unusual 2-dimethyl-3-methyl-azetidine ring to yield 12-deshydroxyl okaramine E, as well as the hydroxylation of 12-deshydroxyl okaramine E to produce okaramine E. The cytochrome P450 monoxygenase okaG converts 12-deshydroxyl okaramine E into 3-desmethyl okaramine B which is further methylated by the methyltransferase okaF into okaramine B. In a shunt pathway, okaG and okaF together are also able to convert okaramine E into okaramine D. Okaramine H is produced by nonenzymatic conversion from okaramine A. This is Cytochrome P450 monooxygenase okaG from Penicillium ochrochloron.